The sequence spans 428 residues: Metal tolerance protein 10 (428 aa).

Residues 1–140 (MPLNSYIFFL…EMKKLAKSER (140 aa)) are Cytoplasmic-facing. A helical membrane pass occupies residues 141 to 161 (LAVHISNATNLVLFVAKVYAS). Topologically, residues 162–167 (MESRSM) are vacuolar. Residues 168 to 188 (AVIASTLDSLLDLLSGFILWF) traverse the membrane as a helical segment. The Cytoplasmic portion of the chain corresponds to 189 to 209 (TANAMRKPNQFHYPIGKRRMQ). Residues 210–230 (PVGIIVFASVMATLGLQVLLE) form a helical membrane-spanning segment. Residues 231-248 (SGRQLVAKSGIHMNSTEE) lie on the Vacuolar side of the membrane. The chain crosses the membrane as a helical span at residues 249–269 (KWMIGIMVSVTIVKFLLMLYC). At 270–287 (RGFQNEIVRAYAQDHLFD) the chain is on the cytoplasmic side. Residues 288 to 308 (VVTNSIGLATAVLAVKFYWWI) form a helical membrane-spanning segment. The Vacuolar portion of the chain corresponds to 309–311 (DPT). A helical membrane pass occupies residues 312 to 332 (GAILIALYTIATWARTVLENV). Over 333 to 428 (HSLIGRSAPP…FTHRPEHKCN (96 aa)) the chain is Cytoplasmic.

It belongs to the cation diffusion facilitator (CDF) transporter (TC 2.A.4) family. SLC30A subfamily.

It is found in the vacuole membrane. In terms of biological role, involved in sequestration of excess metal in the cytoplasm into vacuoles to maintain metal homeostasis. The protein is Metal tolerance protein 10 (MTP10) of Arabidopsis thaliana (Mouse-ear cress).